The sequence spans 234 residues: Triosephosphate isomerase (234 aa).

8 to 10 (NFK) is a substrate binding site. Histidine 90 acts as the Electrophile in catalysis. Glutamate 159 functions as the Proton acceptor in the catalytic mechanism. Substrate-binding positions include glycine 165, serine 197, and 218–219 (GS).

Homodimer.

The protein resides in the cytoplasm. It carries out the reaction D-glyceraldehyde 3-phosphate = dihydroxyacetone phosphate. It participates in carbohydrate biosynthesis; gluconeogenesis. The protein operates within carbohydrate degradation; glycolysis; D-glyceraldehyde 3-phosphate from glycerone phosphate: step 1/1. Involved in the gluconeogenesis. Catalyzes stereospecifically the conversion of dihydroxyacetone phosphate (DHAP) to D-glyceraldehyde-3-phosphate (G3P). The chain is Triosephosphate isomerase from Helicobacter pylori (strain ATCC 700392 / 26695) (Campylobacter pylori).